Consider the following 202-residue polypeptide: uncharacterized protein (202 aa).

This is an uncharacterized protein from Archaeoglobus fulgidus (strain ATCC 49558 / DSM 4304 / JCM 9628 / NBRC 100126 / VC-16).